We begin with the raw amino-acid sequence, 305 residues long: Mat- sexual cell fertilization-promoting factor (305 aa).

Positions Pro-38–Arg-93 form a DNA-binding region, alpha box.

Belongs to the MATALPHA1 family.

It is found in the nucleus. In terms of biological role, controls fertilization, probably by determining the mating type. May be involved in the post-fertilization steps of the sexual cycle besides mat+. It is required for the developmental events that occur in the female organ after fertilization. The sequence is that of Mat- sexual cell fertilization-promoting factor (FMR1) from Podospora anserina (Pleurage anserina).